A 1465-amino-acid polypeptide reads, in one-letter code: MSDLFAKLMDQIEMPLDMRRSSAFSSADIIEVKVHSVSRLWEFHFAFAAVLPIATYRELHDRLIRTFEAADIKVTFDIQAAQVDYSDDLLQAYYQEAFEHAPCNSASFKSSFSKLKVTYENDKLIIAAPRFVNNDHFRKNHLPNLVKQLEAFGFGTLTIDMVSDQEMTEHLTKDFVSSRQALVKKAVQDNLEAQKSLEAMMPPVEEATPAPKFDYKERAAKRQAGFEKATITPMIEIETEENRIVFEGMVFDVERKTTRTGRHIINFKMTDYTSSFALQKWAKDDEELRKFDMIAKGAWLRVQGNIETNPFTKSLTMNVQQVKEIVHHERKDLMPEGQKRVELHAHTNMSTMDALPTVESLIDTAAKWGHKAVAITDHANVQSFPHGYHRARKAGIKAIFGLEANIVEDKAPISYDPVDMDLHEATYVVFDVETTGLSAMNNDLIQIAASKMFKGNIVEQFDEFIDPGHPLSAFTTELTGITDKHLQGAKPLVTVLKAFQDFCKDSILVAHNASFDVGFMNANYERHDLPKITQPVIDTLEFARNLYPEYKRHGLGPLTKRFQVSLDHHHMANYDAEATGRLLFIFLRDAREKHGIKNLLQLNTDLVAEDSYKKARIKHATIYVQNQVGLKNMFKLVSLSNIKYFEGVPRIPRTVLDAHREGLLLGTACSDGEVFDAVLTKGIDAAVDLAKYYDFIEIMPPAIYQPLVVRELIKDQAGIEQVIRDLIEVGKRANKPVLATGNVHYLEPEEEIYREIIVRSLGQGAMINRTIGRGEGAQPAPLPKAHFRTTNEMLDEFAFLGKDLAYQVVVENTQDFADRIEEVEVVKGDLYTPYIDKAEETVAELTYQKAFEIYGNPLPDIIDLRIEKELTSILGNGFAVIYLASQMLVNRSNERGYLVGSRGSVGSSFVATMIGITEVNPMPPHYVCPSCQHSEFITDGSVGSGYDLPNKPCPKCGTPYQKDGQDIPFETFLGFDGDKVPDIDLNFSGDDQPSAHLDVRDIFGDEYAFRAGTVGTVAEKTAYGFVKGYERDYGKFYRDAEVDRLAAGAAGVKRTTGQHPGGIVVIPNYMDVYDFTPVQYPADDVTASWQTTHFNFHDIDENVLKLDILGHDDPTMIRKLQDLSGIDPITIPADDPGVMALFSGTEILGVTPEQIGTPTGMLGIPEFGTNFVRGMVNETHPTTFAELLQLSGLSHGTDVWLGNAQDLIKEGVATLKTVIGCRDDIMVYLMHAGLEPKMAFTIMERVRKGLWLKISEEERNGYIDAMRENNVPDWYIESCGKIKYMFPKAHAAAYVLMALRVAYFKVHHPIMYYCAYFSIRAKAFELKTMSDGLDAVKARMEDITIKRKNNEATNVENDLFTTLEIVNEMLERGFKFGKLDLYKSDAIEFQIKGDTLIPPFIALEGLGENVAKQIVKARQEGEFLSKMELRKRGGASSTLVEKMDEMGILGNMPEDNQLSLFDDFF.

The Exonuclease domain occupies 427-583 (YVVFDVETTG…YDAEATGRLL (157 aa)).

Belongs to the DNA polymerase type-C family. PolC subfamily.

The protein localises to the cytoplasm. The enzyme catalyses DNA(n) + a 2'-deoxyribonucleoside 5'-triphosphate = DNA(n+1) + diphosphate. Required for replicative DNA synthesis. This DNA polymerase also exhibits 3' to 5' exonuclease activity. The sequence is that of DNA polymerase III PolC-type from Streptococcus pyogenes serotype M5 (strain Manfredo).